A 37-amino-acid chain; its full sequence is Large ribosomal subunit protein bL36c (37 aa).

The protein belongs to the bacterial ribosomal protein bL36 family.

The protein localises to the plastid. It is found in the chloroplast. In Angiopteris evecta (Mule's foot fern), this protein is Large ribosomal subunit protein bL36c.